Reading from the N-terminus, the 148-residue chain is Protein NrdI (148 aa).

It belongs to the NrdI family.

Probably involved in ribonucleotide reductase function. This Mycolicibacterium gilvum (strain PYR-GCK) (Mycobacterium gilvum (strain PYR-GCK)) protein is Protein NrdI.